The following is a 651-amino-acid chain: Forkhead box protein K2 (651 aa).

Residues 1–13 (MAAAAALSGAGAP) are compositionally biased toward low complexity. Positions 1 to 29 (MAAAAALSGAGAPPAGGGAGGGGSPPGGW) are disordered. Residues 14–26 (PAGGGAGGGGSPP) show a composition bias toward gly residues. At Ser-24 the chain carries Phosphoserine. The FHA domain maps to 48–119 (VTIGRNSSQG…NGVFVDGVFQ (72 aa)). Residues 120-162 (RRGAPPLQLPRVCTFRFPSTNIKITFTALSSEKREKQEAPESP) are required for interaction with DVL2 and SUDS3. The residue at position 135 (Arg-135) is an Omega-N-methylarginine. Disordered stretches follow at residues 150–171 (SEKR…PHIS) and 194–251 (TISA…SKPP). Glycyl lysine isopeptide (Lys-Gly) (interchain with G-Cter in SUMO2) cross-links involve residues Lys-152 and Lys-155. A compositionally biased stretch (polar residues) spans 194 to 203 (TISAANSCPS). Position 230 is a phosphoserine (Ser-230). Basic and acidic residues predominate over residues 233-249 (ENEKEASGGDSPKDDSK). Residues 249–344 (KPPYSYAQLI…EQAFRKRRPR (96 aa)) constitute a DNA-binding region (fork-head). The tract at residues 291-309 (KGWQNSIRHNLSLNRYFIK) is DNA-binding; major groove. Mg(2+) contacts are provided by Leu-301, Ser-302, Asn-304, and Phe-307. DNA-binding; minor groove regions lie at residues 319–323 (KGSFW) and 339–344 (RKRRPR). Positions 350–399 (RTPLGPLSSRSAPASPNHAGVLSAHSSGAQTPESLSREGSPAPLEPEPGA) are disordered. Phosphoserine is present on Ser-364. The span at 373–383 (AHSSGAQTPES) shows a compositional bias: polar residues. Ser-389, Ser-415, and Ser-419 each carry phosphoserine. Lys-518 is covalently cross-linked (Glycyl lysine isopeptide (Lys-Gly) (interchain with G-Cter in SUMO2)). Ser-590 is modified (phosphoserine). Positions 601-614 (ASASLPTKRQNGDQ) are enriched in polar residues. Positions 601-623 (ASASLPTKRQNGDQAEQPELKRV) are disordered. A Glycyl lysine isopeptide (Lys-Gly) (interchain with G-Cter in SUMO2) cross-link involves residue Lys-624.

In terms of assembly, component of SIN3A-, but not SIN3B-, containing multiprotein complexes. Interacts with DVL1, DVL2 (when phosphorylated) and DVL3; the interaction induces DVL2 nuclear translocation. Interacts with SUDS3. Interacts with BAP1 (when phosphorylated); leading to recruit the PR-DUB complex and repress FOXK2 target genes. Accessory component of the polycomb repressive deubiquitinase (PR-DUB) complex, at least composed of BAP1, one of ASXL1, ASXL2 or (probably) ASXL3 and one of MBD5 or MBD6. The PR-DUB core associates with a number of accessory proteins, including FOXK1, FOXK2, KDM1B, HCFC1 and OGT. Post-translationally, hyperphosphorylated during mitosis by CDK1 and, to a lower extent, CDK2. Phosphorylation at Ser-364 and Ser-419 affects stability by promoting degradation. In terms of tissue distribution, expressed in a wide range of adult brain regions, namely the piriform cortex, the major islands of Calleja and cells lining the lateral ventricles, the bed nucleus of stria terminalis, the paraventricular thalamic nucleus, habenula and all structures of the hippocampus. Also present in the hypothalamus, cerebral cortex and in the Purkinje cell layer in the cerebellum. Additionally expressed in dopamine neurons of the substantia and more sparsely in the ventral tegmental area.

It is found in the nucleus. The protein resides in the cytoplasm. Transcriptional regulator involved in different processes such as glucose metabolism, aerobic glycolysis and autophagy. Recognizes and binds the forkhead DNA sequence motif (5'-GTAAACA-3') and can both act as a transcription activator or repressor, depending on the context. Together with FOXK1, acts as a key regulator of metabolic reprogramming towards aerobic glycolysis, a process in which glucose is converted to lactate in the presence of oxygen. Acts by promoting expression of enzymes for glycolysis (such as hexokinase-2 (HK2), phosphofructokinase, pyruvate kinase (PKLR) and lactate dehydrogenase), while suppressing further oxidation of pyruvate in the mitochondria by up-regulating pyruvate dehydrogenase kinases PDK1 and PDK4. Probably plays a role in gluconeogenesis during overnight fasting, when lactate from white adipose tissue and muscle is the main substrate. Together with FOXK1, acts as a negative regulator of autophagy in skeletal muscle: in response to starvation, enters the nucleus, binds the promoters of autophagy genes and represses their expression, preventing proteolysis of skeletal muscle proteins. In addition to the 5'-GTAAACA-3' DNA motif, also binds the 5'-TGANTCA-3' palindromic DNA motif, and co-associates with JUN/AP-1 to activate transcription. Also able to bind to a minimal DNA heteroduplex containing a G/T-mismatch with 5'-TRT[G/T]NB-3' sequence. Binds to NFAT-like motifs (purine-rich) in the IL2 promoter. Positively regulates WNT/beta-catenin signaling by translocating DVL proteins into the nucleus. Accessory component of the polycomb repressive deubiquitinase (PR-DUB) complex; recruits the PR-DUB complex to specific FOXK2-bound genes. This chain is Forkhead box protein K2, found in Mus musculus (Mouse).